Consider the following 630-residue polypeptide: Probable potassium transport system protein Kup (630 aa).

Transmembrane regions (helical) follow at residues 17–37, 51–71, 105–125, 144–164, 175–195, 218–238, 255–275, 283–303, 344–364, 374–394, 402–422, and 428–448; these read LAIA…LYSL, PSAI…VVGI, ITGL…GDAV, PQLS…LFWI, LFGP…IYHI, VLLA…AEAL, YVLV…LLLL, PFFL…STVA, IYVP…VIGF, YGIA…VVMV, LLVA…FGAN, and QGGW…MTWY.

Belongs to the HAK/KUP transporter (TC 2.A.72) family.

The protein resides in the cell inner membrane. It catalyses the reaction K(+)(in) + H(+)(in) = K(+)(out) + H(+)(out). Functionally, transport of potassium into the cell. Likely operates as a K(+):H(+) symporter. In Burkholderia mallei (strain NCTC 10247), this protein is Probable potassium transport system protein Kup.